Consider the following 81-residue polypeptide: Cysteine-rich and transmembrane domain-containing protein PCC1 (81 aa).

The span at 1–22 (MNQSAQNYFSVQKPSETSSGPY) shows a compositional bias: polar residues. Residues 1 to 34 (MNQSAQNYFSVQKPSETSSGPYTSPPPIGYPTRD) form a disordered region. A helical transmembrane segment spans residues 56–74 (AIMSCFSTCMECIFCCGVC).

This sequence belongs to the CYSTM1 family. As to expression, expressed at very low levels in seedlings and petioles, and at higher levels in leaves. Also present in phloem sap.

The protein localises to the cell membrane. Its function is as follows. Modulates resistance against pathogens including oomycetes (e.g. Hyaloperonospora parasitica and Phytophthora brassicae) and fungi (e.g. Phytophthora brassicae). Controls the abscisic acid-mediated (ABA) signaling pathways. Regulator of the flowering time in response to stress (e.g. UV-C). Regulates polar lipid content; promotes phosphatidylinositol (PI) and 18:0 but prevents 18:2 and 18:3 polar lipids accumulation. The chain is Cysteine-rich and transmembrane domain-containing protein PCC1 (PCC1) from Arabidopsis thaliana (Mouse-ear cress).